Reading from the N-terminus, the 739-residue chain is Polyribonucleotide nucleotidyltransferase (739 aa).

Residues aspartate 514 and aspartate 520 each coordinate Mg(2+). The KH domain maps to 580-639 (PRIITVKIPVDKIGEVIGPKGKMINQIQEDTGADITIEDDGTIYIGAAQGSQAEAARATI). The S1 motif domain occupies 651 to 723 (GERYLGTVVK…SRGKLSLIPV (73 aa)).

The protein belongs to the polyribonucleotide nucleotidyltransferase family. It depends on Mg(2+) as a cofactor.

Its subcellular location is the cytoplasm. It catalyses the reaction RNA(n+1) + phosphate = RNA(n) + a ribonucleoside 5'-diphosphate. Its function is as follows. Involved in mRNA degradation. Catalyzes the phosphorolysis of single-stranded polyribonucleotides processively in the 3'- to 5'-direction. The polypeptide is Polyribonucleotide nucleotidyltransferase (Streptomyces coelicolor (strain ATCC BAA-471 / A3(2) / M145)).